Consider the following 753-residue polypeptide: Ion-translocating oxidoreductase complex subunit C (753 aa).

4Fe-4S ferredoxin-type domains follow at residues 367–397 and 407–436; these read EMGEPQEEKGCIRCSACADACPADLLPQQLY and KATAHNLADCIECGACAWVCPSNIPLVQYF. 8 residues coordinate [4Fe-4S] cluster: cysteine 377, cysteine 380, cysteine 383, cysteine 387, cysteine 416, cysteine 419, cysteine 422, and cysteine 426. Disordered regions lie at residues 517–561, 606–625, 640–659, and 705–735; these read AKPD…RKAA, RKAEQQVAPVEAPVAEPVDP, and AKARKAEQQAAQPDLASAAANDDPRKAAVAA. A compositionally biased stretch (basic and acidic residues) spans 526–537; the sequence is AAREARKAEARA. Low complexity-rich tracts occupy residues 610–622, 644–656, and 712–735; these read QQVAPVEAPVAEP and QQAAQPDLASAAANDDPRKAAVAA.

It belongs to the 4Fe4S bacterial-type ferredoxin family. RnfC subfamily. As to quaternary structure, the complex is composed of six subunits: RnfA, RnfB, RnfC, RnfD, RnfE and RnfG. [4Fe-4S] cluster is required as a cofactor.

It localises to the cell inner membrane. In terms of biological role, part of a membrane-bound complex that couples electron transfer with translocation of ions across the membrane. The sequence is that of Ion-translocating oxidoreductase complex subunit C from Klebsiella pneumoniae (strain 342).